A 3412-amino-acid chain; its full sequence is Genome polyprotein (3412 aa).

Topologically, residues 1–104 (MSGRKAQGKT…LSSRKRRSSE (104 aa)) are cytoplasmic. The tract at residues 38-72 (PGPSRGVQGFIFFFLFNILTGKKLTTHLKRLWRML) is hydrophobic; homodimerization of capsid protein C. Positions 102 to 121 (SSEMTMMPLLILSMVILGGG) are cleaved as a propeptide — ER anchor for the capsid protein C, removed in mature form by serine protease NS3. A helical membrane pass occupies residues 105–125 (MTMMPLLILSMVILGGGVTLV). Residues 126-244 (RKNRWLLLNV…GERQLQKIER (119 aa)) lie on the Extracellular side of the membrane. Residues asparagine 134 and asparagine 150 are each glycosylated (N-linked (GlcNAc...) asparagine; by host). The chain crosses the membrane as a helical span at residues 245–265 (WLVRNPFFAVTALAIAYLVGN). Over 266–270 (NKTQR) the chain is Cytoplasmic. A helical membrane pass occupies residues 271 to 285 (VVIALLVLAVGPAYS). Residues 286–730 (AHCIGITDRD…TVFGSAFQGL (445 aa)) lie on the Extracellular side of the membrane. Cystine bridges form between cysteine 288–cysteine 315, cysteine 345–cysteine 401, cysteine 345–cysteine 406, cysteine 359–cysteine 390, cysteine 377–cysteine 401, cysteine 377–cysteine 406, cysteine 467–cysteine 568, and cysteine 585–cysteine 615. The tract at residues 383–396 (DRGWGNGCGLFGKG) is fusion peptide. Residues 731–751 (FGGLSWITKVIMGAVLIWVGI) form a helical membrane-spanning segment. Residues 752–757 (NTRNMT) lie on the Extracellular side of the membrane. A helical membrane pass occupies residues 758–778 (MSMSMILVGVIMMFLSLGVGA). Residues 779–1132 (DQGCAVNFGK…LVRSWVTAGE (354 aa)) lie on the Extracellular side of the membrane. 6 disulfide bridges follow: cysteine 782–cysteine 793, cysteine 833–cysteine 921, cysteine 957–cysteine 1002, cysteine 1058–cysteine 1107, cysteine 1069–cysteine 1091, and cysteine 1090–cysteine 1094. 2 N-linked (GlcNAc...) asparagine; by host glycosylation sites follow: asparagine 908 and asparagine 986. The helical transmembrane segment at 1133-1153 (VHAVPFGLVSMMIAMEVVLRK) threads the bilayer. Residues 1154–1201 (RQGPKQMLVGGIILLGAMLVGQVTMLDLVKLIVAVGLHFHEINNGGDA) lie on the Cytoplasmic side of the membrane. A helical membrane pass occupies residues 1202-1222 (MYMALIASFSIRPGLLIGFGL). At 1223 to 1287 (RTLWSPRERL…ILPLMALLTP (65 aa)) the chain is on the lumenal side. A helical transmembrane segment spans residues 1288 to 1308 (VTMYEVRMATMLFCTVVIVGV). Over 1309 to 1355 (LHQNSKDTSMQKTIPIVALTLTSYMGLTQPFLGLCAYMSTQVFGRRS) the chain is Cytoplasmic. Residues 1356-1376 (IPVNEALAAAGLVGVLAGLAF) form a helical membrane-spanning segment. Over 1377–1378 (QD) the chain is Lumenal. A helical transmembrane segment spans residues 1379-1399 (MENFLGPIAVGGILMMLVSVA). Topologically, residues 1400–1456 (GKVDGLELKKLGEVSWEEEAEISGSSSRYDVALSEQGEFKLLSEDKVPWDQIVMTSL) are cytoplasmic. The interacts with and activates NS3 protease stretch occupies residues 1407 to 1446 (LKKLGEVSWEEEAEISGSSSRYDVALSEQGEFKLLSEDKV). An intramembrane region (helical) is located at residues 1457-1477 (ALVGAAIHPFALLLVLGGWVL). Over 1478–2157 (HIKGARRSGD…RNALSMMPEA (680 aa)) the chain is Cytoplasmic. Residues 1485–1665 (SGDVLWDIPT…EVKEESKEEL (181 aa)) form the Peptidase S7 domain. Residues histidine 1537, aspartate 1561, and serine 1622 each act as charge relay system; for serine protease NS3 activity in the active site. A Helicase ATP-binding domain is found at 1669–1825 (PTMLKKGMTT…HSNGEIEDVQ (157 aa)). An important for RNA-binding region spans residues 1673–1676 (KKGM). 1682–1689 (FHPGAGKT) provides a ligand contact to ATP. Positions 1773-1776 (DEAH) match the DEAH box motif. Positions 1820-1997 (EIEDVQTDIP…VRGGMVAPLY (178 aa)) constitute a Helicase C-terminal domain. At lysine 1877 the chain carries N6-acetyllysine; by host. Positions 1942–1961 (AAQRRGRIGRNPNRDGDSYY) are disordered. Residues 2158 to 2178 (MTIVMLFILAGLLTSGMVIFF) traverse the membrane as a helical segment. At 2179–2186 (MSPKGMSR) the chain is on the lumenal side. The segment at residues 2187 to 2207 (MSMAMGTMAGSGYLMFLGGVK) is an intramembrane region (helical). Over 2208–2209 (PT) the chain is Lumenal. A helical transmembrane segment spans residues 2210-2230 (HISYVMLIFFVLMVVIIPEPG). Residues 2231–2241 (QQRSIQDNQVA) lie on the Cytoplasmic side of the membrane. The chain crosses the membrane as a helical span at residues 2242–2262 (YLIIGILTLLSVVAANELGML). Residues 2263–2293 (EKTKEDFFGKRNIATSGGTIPWSWPDLDLKP) lie on the Lumenal side of the membrane. The helical intramembrane region spans 2294 to 2314 (GAAWTVYVGIVTMLSPMLHHW). Over 2315–2360 (IKVEYGNLSLSGIAQSASVLSFMDKGVPFMKMNISVVILLVSGWNS) the chain is Lumenal. Residues 2361–2380 (ITVIPLLCGVGGAMLHWTLI) form a helical membrane-spanning segment. Topologically, residues 2381–2421 (LPGIKAQQSKLAQKRVFHGVAKNPVVDGNPTADIEEAPEMP) are cytoplasmic. The helical transmembrane segment at 2422 to 2442 (ALYEKKLALYLLLALSLMSVA) threads the bilayer. The Lumenal segment spans residues 2443–2445 (MCR). A helical membrane pass occupies residues 2446-2466 (TPFSLAEGIVLSSAALGPLIE). The Cytoplasmic portion of the chain corresponds to 2467 to 3411 (GNTSLLWNGP…VDADLQPGEL (945 aa)). The region spanning 2508–2772 (GSANGKTLGE…DVILPIGTRS (265 aa)) is the mRNA cap 0-1 NS5-type MT domain. Residue serine 2563 coordinates S-adenosyl-L-methionine. Residue serine 2563 is modified to Phosphoserine. Catalysis depends on lysine 2568, which acts as the For 2'-O-MTase activity. Glycine 2593, tryptophan 2594, threonine 2611, leucine 2612, aspartate 2638, and isoleucine 2639 together coordinate S-adenosyl-L-methionine. Aspartate 2653 functions as the For 2'-O-MTase activity in the catalytic mechanism. An S-adenosyl-L-methionine-binding site is contributed by isoleucine 2654. Active-site for 2'-O-MTase activity residues include lysine 2689 and glutamate 2725. Position 2727 (tyrosine 2727) interacts with S-adenosyl-L-methionine. The Nuclear localization signal motif lies at 2879–2912 (RKIMRVVNRWLFRHLAREKKPRLCTKEEFIAKVR). Zn(2+)-binding residues include glutamate 2946, histidine 2950, cysteine 2955, and cysteine 2958. In terms of domain architecture, RdRp catalytic spans 3036–3188 (GGFYADDTAG…KPVDDRFGLA (153 aa)). Zn(2+) contacts are provided by histidine 3223, cysteine 3239, and cysteine 3358.

In the N-terminal section; belongs to the class I-like SAM-binding methyltransferase superfamily. mRNA cap 0-1 NS5-type methyltransferase family. In terms of assembly, homodimer. Interacts (via N-terminus) with host EXOC1 (via C-terminus); this interaction results in EXOC1 degradation through the proteasome degradation pathway. Forms heterodimers with envelope protein E in the endoplasmic reticulum and Golgi. As to quaternary structure, homodimer; in the endoplasmic reticulum and Golgi. Interacts with protein prM. Interacts with non-structural protein 1. In terms of assembly, homodimer; Homohexamer when secreted. Interacts with envelope protein E. Interacts (via N-terminus) with serine protease NS3. As to quaternary structure, forms a heterodimer with serine protease NS3. May form homooligomers. In terms of assembly, forms a heterodimer with NS2B. Interacts with non-structural protein 2A (via N-terminus). Interacts with NS4B. Interacts with unphosphorylated RNA-directed RNA polymerase NS5; this interaction stimulates RNA-directed RNA polymerase NS5 guanylyltransferase activity. NS3 interacts with host PDCD6IP; this interaction contributes to virion release. Interacts with serine protease NS3. As to quaternary structure, homodimer. Interacts with host STAT2; this interaction prevents the establishment of cellular antiviral state. Interacts with serine protease NS3. Interacts with host TRIM23; this interaction leads to NS5 ubiquitination. Specific enzymatic cleavages in vivo yield mature proteins. The nascent capsid protein C contains a C-terminal hydrophobic domain that act as a signal sequence for translocation of prM into the lumen of the ER. Mature capsid protein C is cleaved at a site upstream of this hydrophobic domain by NS3. prM is cleaved in post-Golgi vesicles by a host furin, releasing the mature small envelope protein M, and peptide pr. Non-structural protein 2A-alpha, a C-terminally truncated form of non-structural protein 2A, results from partial cleavage by NS3. Specific enzymatic cleavages in vivo yield mature proteins peptide 2K acts as a signal sequence and is removed from the N-terminus of NS4B by the host signal peptidase in the ER lumen. Signal cleavage at the 2K-4B site requires a prior NS3 protease-mediated cleavage at the 4A-2K site. Post-translationally, cleaved in post-Golgi vesicles by a host furin, releasing the mature small envelope protein M, and peptide pr. This cleavage is incomplete as up to 30% of viral particles still carry uncleaved prM. In terms of processing, N-glycosylated. N-glycosylated. The excreted form is glycosylated and this is required for efficient secretion of the protein from infected cells. Post-translationally, polyubiquitinated; ubiquitination is probably mediated by host TRIM23 and is prerequisite for NS5-STAT2 interaction. NS5 is not ISGylated or sumoylated. In terms of processing, acetylated by host KAT5. Acetylation modulates NS3 RNA-binding and unwinding activities and plays an important positive role for viral replication. Phosphorylated on serines residues. This phosphorylation may trigger NS5 nuclear localization.

It localises to the virion. Its subcellular location is the host nucleus. It is found in the host cytoplasm. The protein localises to the host perinuclear region. The protein resides in the secreted. It localises to the virion membrane. Its subcellular location is the host endoplasmic reticulum membrane. The enzyme catalyses Selective hydrolysis of -Xaa-Xaa-|-Yaa- bonds in which each of the Xaa can be either Arg or Lys and Yaa can be either Ser or Ala.. It catalyses the reaction RNA(n) + a ribonucleoside 5'-triphosphate = RNA(n+1) + diphosphate. It carries out the reaction a ribonucleoside 5'-triphosphate + H2O = a ribonucleoside 5'-diphosphate + phosphate + H(+). The catalysed reaction is ATP + H2O = ADP + phosphate + H(+). The enzyme catalyses a 5'-end (5'-triphosphoguanosine)-ribonucleoside in mRNA + S-adenosyl-L-methionine = a 5'-end (N(7)-methyl 5'-triphosphoguanosine)-ribonucleoside in mRNA + S-adenosyl-L-homocysteine. It catalyses the reaction a 5'-end (N(7)-methyl 5'-triphosphoguanosine)-ribonucleoside in mRNA + S-adenosyl-L-methionine = a 5'-end (N(7)-methyl 5'-triphosphoguanosine)-(2'-O-methyl-ribonucleoside) in mRNA + S-adenosyl-L-homocysteine + H(+). Plays a role in virus budding by binding to the cell membrane and gathering the viral RNA into a nucleocapsid that forms the core of a mature virus particle. During virus entry, may induce genome penetration into the host cytoplasm after hemifusion induced by the surface proteins. Can migrate to the cell nucleus where it modulates host functions. In terms of biological role, inhibits RNA silencing by interfering with host Dicer. Its function is as follows. Prevents premature fusion activity of envelope proteins in trans-Golgi by binding to envelope protein E at pH6.0. After virion release in extracellular space, gets dissociated from E dimers. Functionally, acts as a chaperone for envelope protein E during intracellular virion assembly by masking and inactivating envelope protein E fusion peptide. prM is the only viral peptide matured by host furin in the trans-Golgi network probably to avoid catastrophic activation of the viral fusion activity in acidic Golgi compartment prior to virion release. prM-E cleavage is inefficient, and many virions are only partially matured. These uncleaved prM would play a role in immune evasion. May play a role in virus budding. Exerts cytotoxic effects by activating a mitochondrial apoptotic pathway through M ectodomain. May display a viroporin activity. In terms of biological role, binds to host cell surface receptor and mediates fusion between viral and cellular membranes. Envelope protein is synthesized in the endoplasmic reticulum in the form of heterodimer with protein prM. They play a role in virion budding in the ER, and the newly formed immature particle is covered with 60 spikes composed of heterodimer between precursor prM and envelope protein E. The virion is transported to the Golgi apparatus where the low pH causes dissociation of PrM-E heterodimers and formation of E homodimers. prM-E cleavage is inefficient, and many virions are only partially matured. These uncleaved prM would play a role in immune evasion. Its function is as follows. Involved in immune evasion, pathogenesis and viral replication. Once cleaved off the polyprotein, is targeted to three destinations: the viral replication cycle, the plasma membrane and the extracellular compartment. Essential for viral replication. Required for formation of the replication complex and recruitment of other non-structural proteins to the ER-derived membrane structures. Excreted as a hexameric lipoparticle that plays a role against host immune response. Antagonizing the complement function. Binds to the host macrophages and dendritic cells. Inhibits signal transduction originating from Toll-like receptor 3 (TLR3). Functionally, component of the viral RNA replication complex that functions in virion assembly and antagonizes the host immune response. Required cofactor for the serine protease function of NS3. May have membrane-destabilizing activity and form viroporins. In terms of biological role, displays three enzymatic activities: serine protease, NTPase and RNA helicase. NS3 serine protease, in association with NS2B, performs its autocleavage and cleaves the polyprotein at dibasic sites in the cytoplasm: C-prM, NS2A-NS2B, NS2B-NS3, NS3-NS4A, NS4A-2K and NS4B-NS5. NS3 RNA helicase binds RNA and unwinds dsRNA in the 3' to 5' direction. Also plays a role in virus assembly. Its function is as follows. Regulates the ATPase activity of the NS3 helicase activity. NS4A allows NS3 helicase to conserve energy during unwinding. Functionally, functions as a signal peptide for NS4B and is required for the interferon antagonism activity of the latter. Induces the formation of ER-derived membrane vesicles where the viral replication takes place. Inhibits interferon (IFN)-induced host STAT1 phosphorylation and nuclear translocation, thereby preventing the establishment of cellular antiviral state by blocking the IFN-alpha/beta pathway. In terms of biological role, replicates the viral (+) and (-) RNA genome, and performs the capping of genomes in the cytoplasm. NS5 methylates viral RNA cap at guanine N-7 and ribose 2'-O positions. Besides its role in RNA genome replication, also prevents the establishment of cellular antiviral state by blocking the interferon-alpha/beta (IFN-alpha/beta) signaling pathway. IFN-I induces binding of NS5 to host IFN-activated transcription factor STAT2, preventing its transcriptional activity. Host TRIM23 is the E3 ligase that interacts with and polyubiquitinates NS5 to promote its binding to STAT2 and trigger IFN-I signaling inhibition. The sequence is that of Genome polyprotein from Yellow fever virus (isolate Uganda/A7094A4/1948) (YFV).